A 238-amino-acid polypeptide reads, in one-letter code: Tetraspanin-4 (238 aa).

Topologically, residues 1–13 are cytoplasmic; the sequence is MARACLQAVKYLM. Residues 14–34 traverse the membrane as a helical segment; the sequence is FAFNLLFWLGGCGVLGVGIWL. At 35 to 55 the chain is on the extracellular side; it reads AATQGSFATLSSSFPSLSAAN. Residues 56 to 76 traverse the membrane as a helical segment; it reads LLIITGAFVMAIGFVGCLGAI. Residues 77–85 lie on the Cytoplasmic side of the membrane; sequence KENKCLLLT. Residues 86-106 traverse the membrane as a helical segment; the sequence is FFLLLLLVFLLEATIAILFFA. The Extracellular portion of the chain corresponds to 107 to 201; the sequence is YTDKIDRYAQ…ETVKVWLQEN (95 aa). N-linked (GlcNAc...) asparagine glycans are attached at residues N152 and N161. Residues 202–222 traverse the membrane as a helical segment; it reads LLAVGIFGLCTALVQILGLTF. The Cytoplasmic portion of the chain corresponds to 223 to 238; the sequence is AMTMYCQVVKADTYCA.

It belongs to the tetraspanin (TM4SF) family. As to quaternary structure, forms a complex with integrins. Interacts with HRH4. In terms of tissue distribution, expressed in multiple tissues but is absent in brain, lymphoid cells, and platelets.

It localises to the cell membrane. Functionally, structural component of specialized membrane microdomains known as tetraspanin-enriched microdomains (TERMs), which act as platforms for receptor clustering and signaling. Plays an essential role in migrasome formation and migration on retracting fibers at the rear end of migrating cells. Migrasomes are cellular organelles that form as large vesicle-like structures on retraction fibers of migrating cells. Mechanistically, acts as a membrane curvature sensor and participates in stabilizing the migrasome structure in a late stage of biogenesis. May also play a regulatory role for the histamine H4 receptor/HRH4 without affecting histamine binding to HRH4 or signaling. This Homo sapiens (Human) protein is Tetraspanin-4 (TSPAN4).